A 449-amino-acid chain; its full sequence is Protein CapK (449 aa).

It participates in capsule biogenesis; capsule polysaccharide biosynthesis. Functionally, required for the biosynthesis of type 1 capsular polysaccharide. The chain is Protein CapK (capK) from Staphylococcus aureus.